Reading from the N-terminus, the 954-residue chain is Glycine dehydrogenase (decarboxylating) (954 aa).

Position 706 is an N6-(pyridoxal phosphate)lysine (Lys-706).

It belongs to the GcvP family. The glycine cleavage system is composed of four proteins: P, T, L and H. Requires pyridoxal 5'-phosphate as cofactor.

It carries out the reaction N(6)-[(R)-lipoyl]-L-lysyl-[glycine-cleavage complex H protein] + glycine + H(+) = N(6)-[(R)-S(8)-aminomethyldihydrolipoyl]-L-lysyl-[glycine-cleavage complex H protein] + CO2. Its function is as follows. The glycine cleavage system catalyzes the degradation of glycine. The P protein binds the alpha-amino group of glycine through its pyridoxal phosphate cofactor; CO(2) is released and the remaining methylamine moiety is then transferred to the lipoamide cofactor of the H protein. In Pseudomonas syringae pv. syringae (strain B728a), this protein is Glycine dehydrogenase (decarboxylating).